A 219-amino-acid chain; its full sequence is Putative germin-like protein 8-1 (219 aa).

The N-terminal stretch at 1-23 is a signal peptide; that stretch reads MASFISFLLLAALIGMASWQAIA. An intrachain disulfide couples Cys33 to Cys48. N-linked (GlcNAc...) asparagine glycosylation is found at Asn53 and Asn79. Residues 63-215 enclose the Cupin type-1 domain; sequence AMLDKPRDTA…AFQVDKKIID (153 aa). Mn(2+) is bound by residues His112, His114, Glu119, and His160.

Belongs to the germin family. In terms of assembly, oligomer (believed to be a pentamer but probably hexamer).

It localises to the secreted. It is found in the extracellular space. The protein resides in the apoplast. Its function is as follows. Plays a role in broad-spectrum disease resistance. Probably has no oxalate oxidase activity even if the active site is conserved. The protein is Putative germin-like protein 8-1 of Oryza sativa subsp. japonica (Rice).